Reading from the N-terminus, the 429-residue chain is Type II methyltransferase M.AgeI (429 aa).

Positions 1 to 429 constitute an SAM-dependent MTase C5-type domain; the sequence is MKTIDLFCGA…MAETIKVAIS (429 aa). C80 is a catalytic residue.

This sequence belongs to the class I-like SAM-binding methyltransferase superfamily. C5-methyltransferase family.

The enzyme catalyses a 2'-deoxycytidine in DNA + S-adenosyl-L-methionine = a 5-methyl-2'-deoxycytidine in DNA + S-adenosyl-L-homocysteine + H(+). A methylase, recognizes the double-stranded sequence 5'-ACCGGT-3', methylates C-3 on both strands, and protects the DNA from cleavage by the AgeI endonuclease. The sequence is that of Type II methyltransferase M.AgeI (ageIM) from Thalassovita gelatinovora (Thalassobius gelatinovorus).